A 273-amino-acid polypeptide reads, in one-letter code: Pantothenate synthetase (273 aa).

An ATP-binding site is contributed by Met-27–His-34. His-34 functions as the Proton donor in the catalytic mechanism. Gln-58 serves as a coordination point for (R)-pantoate. Position 58 (Gln-58) interacts with beta-alanine. Gly-144–Asp-147 is an ATP binding site. Residue Gln-150 participates in (R)-pantoate binding. Residues Val-173 and Leu-181–Arg-184 contribute to the ATP site.

The protein belongs to the pantothenate synthetase family. Homodimer.

Its subcellular location is the cytoplasm. It catalyses the reaction (R)-pantoate + beta-alanine + ATP = (R)-pantothenate + AMP + diphosphate + H(+). It participates in cofactor biosynthesis; (R)-pantothenate biosynthesis; (R)-pantothenate from (R)-pantoate and beta-alanine: step 1/1. Functionally, catalyzes the condensation of pantoate with beta-alanine in an ATP-dependent reaction via a pantoyl-adenylate intermediate. This chain is Pantothenate synthetase, found in Campylobacter concisus (strain 13826).